Here is a 91-residue protein sequence, read N- to C-terminus: DNA-binding protein HU (91 aa).

The protein belongs to the bacterial histone-like protein family.

Its function is as follows. Histone-like DNA-binding protein which is capable of wrapping DNA to stabilize it, and thus to prevent its denaturation under extreme environmental conditions. The protein is DNA-binding protein HU (hup) of Clostridium pasteurianum.